The primary structure comprises 166 residues: Small ribosomal subunit protein uS5 (166 aa).

Residues 11–74 (LQEKLVQVNR…EAARKNMVDV (64 aa)) enclose the S5 DRBM domain.

Belongs to the universal ribosomal protein uS5 family. As to quaternary structure, part of the 30S ribosomal subunit. Contacts proteins S4 and S8.

Functionally, with S4 and S12 plays an important role in translational accuracy. Located at the back of the 30S subunit body where it stabilizes the conformation of the head with respect to the body. In Marinobacter nauticus (strain ATCC 700491 / DSM 11845 / VT8) (Marinobacter aquaeolei), this protein is Small ribosomal subunit protein uS5.